Reading from the N-terminus, the 556-residue chain is Formate--tetrahydrofolate ligase (556 aa).

An ATP-binding site is contributed by 65 to 72 (TPAGEGKS).

It belongs to the formate--tetrahydrofolate ligase family.

It catalyses the reaction (6S)-5,6,7,8-tetrahydrofolate + formate + ATP = (6R)-10-formyltetrahydrofolate + ADP + phosphate. It functions in the pathway one-carbon metabolism; tetrahydrofolate interconversion. This chain is Formate--tetrahydrofolate ligase, found in Clostridium perfringens (strain 13 / Type A).